The primary structure comprises 410 residues: Kynureninase (410 aa).

Pyridoxal 5'-phosphate-binding positions include threonine 108, serine 109, 135-138, threonine 176, aspartate 205, histidine 208, and tyrosine 230; that span reads FPTD. Lysine 231 carries the post-translational modification N6-(pyridoxal phosphate)lysine. 2 residues coordinate pyridoxal 5'-phosphate: tryptophan 260 and threonine 286.

It belongs to the kynureninase family. As to quaternary structure, homodimer. Requires pyridoxal 5'-phosphate as cofactor.

The enzyme catalyses L-kynurenine + H2O = anthranilate + L-alanine + H(+). The catalysed reaction is 3-hydroxy-L-kynurenine + H2O = 3-hydroxyanthranilate + L-alanine + H(+). It participates in amino-acid degradation; L-kynurenine degradation; L-alanine and anthranilate from L-kynurenine: step 1/1. The protein operates within cofactor biosynthesis; NAD(+) biosynthesis; quinolinate from L-kynurenine: step 2/3. Its function is as follows. Catalyzes the cleavage of L-kynurenine (L-Kyn) and L-3-hydroxykynurenine (L-3OHKyn) into anthranilic acid (AA) and 3-hydroxyanthranilic acid (3-OHAA), respectively. The chain is Kynureninase from Deinococcus radiodurans (strain ATCC 13939 / DSM 20539 / JCM 16871 / CCUG 27074 / LMG 4051 / NBRC 15346 / NCIMB 9279 / VKM B-1422 / R1).